A 512-amino-acid polypeptide reads, in one-letter code: MWRVRKRGYFGIWSFPLIIAAVCAQSVNDPSNMSLVKETVDRLLKGYDIRLRPDFGGPPVAVGMNIDIASIDMVSEVNMDYTLTMYFQQAWRDKRLSYNVIPLNLTLDNRVADQLWVPDTYFLNDKKSFVHGVTVKNRMIRLHPDGTVLYGLRITTTAACMMDLRRYPLDEQNCTLEIESYGYTTDDIEFYWRGDDNAVTGVTKIELPQFSIVDYKLITKKVVFSTGSYPRLSLSFKLKRNIGYFILQTYMPSILITILSWVSFWINYDASAARVALGITTVLTMTTINTHLRETLPKIPYVKAIDMYLMGCFVFVFMALLEYALVNYIFFGRGPQRQKKAAEKAASANNEKMRLDVNKIFYKDIKQNGTQYRSLWDPTGNLSPTRRTTNYDFSLYTMDPHENILLSTLEIKNEMATSEAVMGLGDPRSTMLAYDASSIQYRKAGLPRHSFGRNALERHVAQKKSRLRRRASQLKITIPDLTDVNAIDRWSRIFFPVVFSFFNIVYWLYYVN.

The signal sequence occupies residues 1-25; sequence MWRVRKRGYFGIWSFPLIIAAVCAQ. Residues 26–241 are Extracellular-facing; that stretch reads SVNDPSNMSL…LSLSFKLKRN (216 aa). N-linked (GlcNAc...) asparagine glycosylation is found at N32 and N104. Y121 contributes to the histamine binding site. C160 and C174 are oxidised to a cystine. N173 is a glycosylation site (N-linked (GlcNAc...) asparagine). Histamine is bound by residues 180–181 and T226; that span reads SY. Positions 181 and 226 each coordinate 4-aminobutanoate. A helical transmembrane segment spans residues 242 to 262; sequence IGYFILQTYMPSILITILSWV. Over 263 to 272 the chain is Cytoplasmic; that stretch reads SFWINYDASA. A helical membrane pass occupies residues 273-292; that stretch reads ARVALGITTVLTMTTINTHL. Over 293–310 the chain is Extracellular; the sequence is RETLPKIPYVKAIDMYLM. Residues 311-331 form a helical membrane-spanning segment; the sequence is GCFVFVFMALLEYALVNYIFF. Residues 332 to 490 are Cytoplasmic-facing; sequence GRGPQRQKKA…LTDVNAIDRW (159 aa). At Y441 the chain carries Phosphotyrosine. The chain crosses the membrane as a helical span at residues 491-511; sequence SRIFFPVVFSFFNIVYWLYYV. N512 is a topological domain (extracellular).

Belongs to the ligand-gated ion channel (TC 1.A.9) family. Gamma-aminobutyric acid receptor (TC 1.A.9.5) subfamily. GABRB2 sub-subfamily. Heteropentamer, formed by a combination of alpha (GABRA1-6), beta (GABRB1-3), gamma (GABRG1-3), delta (GABRD), epsilon (GABRE), rho (GABRR1-3), pi (GABRP) and theta (GABRQ) chains, each subunit exhibiting distinct physiological and pharmacological properties. Interacts with UBQLN1. May interact with KIF21B. Identified in a complex of 720 kDa composed of LHFPL4, NLGN2, GABRA1, GABRB2, GABRG2 and GABRB3. As to expression, isoform 1 and isoform 2 show reduced expression in schizophrenic brain. Isoform 3 shows increased expression in schizophrenic and bipolar disorder brains while isoform 4 shows reduced expression.

The protein localises to the postsynaptic cell membrane. It localises to the cell membrane. It is found in the cytoplasmic vesicle membrane. It catalyses the reaction chloride(in) = chloride(out). Its activity is regulated as follows. Allosterically activated by benzodiazepines. Allosterically activated by the anesthetic etomidate. Inhibited by the antagonist bicuculline. Potentiated by histamine. Functionally, beta subunit of the heteropentameric ligand-gated chloride channel gated by gamma-aminobutyric acid (GABA), a major inhibitory neurotransmitter in the brain. GABA-gated chloride channels, also named GABA(A) receptors (GABAAR), consist of five subunits arranged around a central pore and contain GABA active binding site(s) located at the alpha and beta subunit interface(s). When activated by GABA, GABAARs selectively allow the flow of chloride anions across the cell membrane down their electrochemical gradient. Chloride influx into the postsynaptic neuron following GABAAR opening decreases the neuron ability to generate a new action potential, thereby reducing nerve transmission. GABAARs containing alpha-1 and beta-2 or -3 subunits exhibit synaptogenic activity; the gamma-2 subunit being necessary but not sufficient to induce rapid synaptic contacts formation. Extrasynaptic beta-2 receptors contribute to the tonic GABAergic inhibition. Beta-containing GABAARs can simultaneously bind GABA and histamine where histamine binds at the interface of two neighboring beta subunits, which may be involved in the regulation of sleep and wakefulness. The protein is Gamma-aminobutyric acid receptor subunit beta-2 of Homo sapiens (Human).